Consider the following 116-residue polypeptide: Large ribosomal subunit protein bL19 (116 aa).

The protein belongs to the bacterial ribosomal protein bL19 family.

Its function is as follows. This protein is located at the 30S-50S ribosomal subunit interface and may play a role in the structure and function of the aminoacyl-tRNA binding site. In Pseudomonas fluorescens (strain Pf0-1), this protein is Large ribosomal subunit protein bL19.